The chain runs to 693 residues: Endoprotease bli (693 aa).

An N-terminal signal peptide occupies residues 1–20; that stretch reads MYWQLVRILVLFDCLQKILA. A propeptide spans 21–116 (inhibition peptide); that stretch reads IEHDSICIAD…EQRPRVRRKR (96 aa). Asp-161 contacts Ca(2+). Residues 167 to 482 form the Peptidase S8 domain; the sequence is QWYLNNGAQG…YGLMDAGALV (316 aa). An N-linked (GlcNAc...) asparagine glycan is attached at Asn-194. The Charge relay system role is filled by Asp-201. Asp-202 contacts substrate. Ca(2+) is bound by residues Asp-210, Asp-222, Asp-227, and Asp-229. The disordered stretch occupies residues 215 to 242; it reads YDPLASTDINGHDDDPTPQDDGDNKHGT. 237–238 is a substrate binding site; the sequence is DN. His-240 acts as the Charge relay system in catalysis. 4 residues coordinate Ca(2+): Ile-251, Asn-254, Tyr-256, and Gly-258. 2 disulfide bridges follow: Cys-257–Cys-406 and Cys-349–Cys-379. Substrate-binding positions include Glu-282, 299 to 304, Asp-310, and 338 to 341; these read SWGPED and ASGN. Position 304 (Asp-304) interacts with Ca(2+). Asp-347 contacts Ca(2+). Positions 352 and 354 each coordinate substrate. Glu-377 serves as a coordination point for Ca(2+). The active-site Charge relay system is the Ser-414. Ser-414 is a substrate binding site. N-linked (GlcNAc...) asparagine glycosylation is found at Asn-433 and Asn-518. In terms of domain architecture, P/Homo B spans 490-628; sequence TVPEQHICTY…SLLLYGTAEP (139 aa). An intrachain disulfide couples Cys-497 to Cys-526. The disordered stretch occupies residues 629–693; that stretch reads AQPNDPRHSS…LVSAQPELRV (65 aa). Residues 668–681 are compositionally biased toward basic and acidic residues; that stretch reads DSRDWQPKKVENKK.

It belongs to the peptidase S8 family. Furin subfamily. It depends on Ca(2+) as a cofactor. Post-translationally, N-glycosylated. The inhibition peptide, which plays the role of an intramolecular chaperone, is probably autocatalytically removed in the endoplasmic reticulum (ER) and remains non-covalently bound as a potent autoinhibitor. Probably following transport to the trans Golgi, a second cleavage within the inhibition propeptide results in propeptide dissociation and bli activation.

Its subcellular location is the secreted. The enzyme catalyses Release of mature proteins from their proproteins by cleavage of -Arg-Xaa-Yaa-Arg-|-Zaa- bonds, where Xaa can be any amino acid and Yaa is Arg or Lys. Releases albumin, complement component C3 and von Willebrand factor from their respective precursors.. With respect to regulation, inhibited by the propeptide before the second cleavage. Inhibited by ethylenediaminetetraacetic acid (EDTA), ZnSO(4) and chloroketone DEC-RVKR-CMK. Functionally, serine endoprotease which cleaves substrates at the RX(K/R)R consensus motif. In Onchocerca volvulus, this protein is Endoprotease bli.